The following is a 130-amino-acid chain: Large ribosomal subunit protein bL19 (130 aa).

Belongs to the bacterial ribosomal protein bL19 family.

Its function is as follows. This protein is located at the 30S-50S ribosomal subunit interface and may play a role in the structure and function of the aminoacyl-tRNA binding site. This Burkholderia ambifaria (strain ATCC BAA-244 / DSM 16087 / CCUG 44356 / LMG 19182 / AMMD) (Burkholderia cepacia (strain AMMD)) protein is Large ribosomal subunit protein bL19.